Reading from the N-terminus, the 396-residue chain is Probable splicing factor YJU2B (396 aa).

The interval 1–26 is disordered; sequence MGERKGVNKYYPPDFNPEKHGSLNRY. Position 40 is a phosphoserine (Ser-40). Positions 182 to 214 form a coiled coil; the sequence is LNSMLRRRFREKKKAIQEEEERDQALQAKASLT. A disordered region spans residues 295-396; the sequence is IVRRRSRDVP…VADYSDSESE (102 aa). Ser-306 bears the Phosphoserine mark. The span at 315 to 327 shows a compositional bias: basic and acidic residues; that stretch reads KSGEPRVPEEAAQ. Over residues 340 to 350 the composition is skewed to polar residues; it reads TTETPKCSSPR. At Ser-362 the chain carries Phosphoserine.

Belongs to the CWC16 family.

The protein resides in the nucleus. Functionally, may be involved in mRNA splicing. The sequence is that of Probable splicing factor YJU2B from Homo sapiens (Human).